We begin with the raw amino-acid sequence, 293 residues long: Glycine--tRNA ligase alpha subunit (293 aa).

It belongs to the class-II aminoacyl-tRNA synthetase family. As to quaternary structure, tetramer of two alpha and two beta subunits.

Its subcellular location is the cytoplasm. The catalysed reaction is tRNA(Gly) + glycine + ATP = glycyl-tRNA(Gly) + AMP + diphosphate. The chain is Glycine--tRNA ligase alpha subunit from Acaryochloris marina (strain MBIC 11017).